The chain runs to 238 residues: Small ribosomal subunit protein uS3 (238 aa).

One can recognise a KH type-2 domain in the interval 39-109 (IRTFINQQLA…TIKVNVVEVN (71 aa)). Residues 215 to 238 (EAVPREATRRSPQRRLPQFENRSN) form a disordered region.

The protein belongs to the universal ribosomal protein uS3 family. Part of the 30S ribosomal subunit. Forms a tight complex with proteins S10 and S14.

Binds the lower part of the 30S subunit head. Binds mRNA in the 70S ribosome, positioning it for translation. The sequence is that of Small ribosomal subunit protein uS3 from Thermosynechococcus vestitus (strain NIES-2133 / IAM M-273 / BP-1).